The primary structure comprises 438 residues: Trigger factor (438 aa).

The 86-residue stretch at 160-245 folds into the PPIase FKBP-type domain; the sequence is DDKVTIDFVG…VKKIQQAELP (86 aa).

The protein belongs to the FKBP-type PPIase family. Tig subfamily.

The protein localises to the cytoplasm. The enzyme catalyses [protein]-peptidylproline (omega=180) = [protein]-peptidylproline (omega=0). Functionally, involved in protein export. Acts as a chaperone by maintaining the newly synthesized protein in an open conformation. Functions as a peptidyl-prolyl cis-trans isomerase. In Francisella tularensis subsp. holarctica (strain LVS), this protein is Trigger factor.